We begin with the raw amino-acid sequence, 402 residues long: Plasminogen activator inhibitor 1 (402 aa).

Residues 1–23 form the signal peptide; it reads MQMSPALTCLVLGLALVFGEGSA. N-linked (GlcNAc...) asparagine glycosylation is found at Asn232, Asn288, and Asn352.

Belongs to the serpin family. In terms of assembly, forms a heterodimer with TMPRSS7. Interacts with VTN. Binds LRP1B; binding is followed by internalization and degradation. Interacts with PPP1CB. In complex with PLAU/uPA, interacts with PLAUR/uPAR. Interacts with SORL1 and LRP1, either alone or in complex with PLAU; these interactions are abolished in the presence of LRPAP1/RAP. The ternary complex composed of PLAUR-PLAU-PAI1 also interacts with SORL1. Interacts with PLAT/tPA. Also interacts with SORL1, when complexed to PLAT/tPA. Inactivated by proteolytic attack of the urokinase-type (u-PA) and the tissue-type (TPA), cleaving the 369-Arg-|-Met-370 bond. Expressed in endothelial cells. Found in plasma, platelets, and hepatoma and fibrosarcoma cells.

It is found in the secreted. Its function is as follows. Serine protease inhibitor. Inhibits TMPRSS7. Is a primary inhibitor of tissue-type plasminogen activator (PLAT) and urokinase-type plasminogen activator (PLAU). As PLAT inhibitor, it is required for fibrinolysis down-regulation and is responsible for the controlled degradation of blood clots. As PLAU inhibitor, it is involved in the regulation of cell adhesion and spreading. Acts as a regulator of cell migration, independently of its role as protease inhibitor. It is required for stimulation of keratinocyte migration during cutaneous injury repair. It is involved in cellular and replicative senescence. Plays a role in alveolar type 2 cells senescence in the lung. Is involved in the regulation of cementogenic differentiation of periodontal ligament stem cells, and regulates odontoblast differentiation and dentin formation during odontogenesis. The sequence is that of Plasminogen activator inhibitor 1 (SERPINE1) from Homo sapiens (Human).